A 104-amino-acid chain; its full sequence is uncharacterized protein (104 aa).

The HIT domain maps to 3-104 (VFEKIIQGEI…HFHILSGDKH (102 aa)). Positions 93–97 (HLHFH) match the Histidine triad motif motif.

This is an uncharacterized protein from Helicobacter pylori (strain J99 / ATCC 700824) (Campylobacter pylori J99).